Here is a 62-residue protein sequence, read N- to C-terminus: Protein A37.5 homolog (62 aa).

It belongs to the orthopoxviruses A37.5 protein family.

The chain is Protein A37.5 homolog (A40_5R) from Homo sapiens (Human).